Here is a 468-residue protein sequence, read N- to C-terminus: Argininosuccinate lyase (468 aa).

This sequence belongs to the lyase 1 family. Argininosuccinate lyase subfamily.

The protein localises to the cytoplasm. It carries out the reaction 2-(N(omega)-L-arginino)succinate = fumarate + L-arginine. Its pathway is amino-acid biosynthesis; L-arginine biosynthesis; L-arginine from L-ornithine and carbamoyl phosphate: step 3/3. This Cutibacterium acnes (strain DSM 16379 / KPA171202) (Propionibacterium acnes) protein is Argininosuccinate lyase.